The primary structure comprises 478 residues: Sedoheptulokinase (478 aa).

The protein belongs to the FGGY kinase family. Strongly expressed in liver, kidney and pancreas. Expressed at lower levels in placenta and heart. Very weakly expressed in lung and brain.

The protein localises to the cytoplasm. It catalyses the reaction sedoheptulose + ATP = D-sedoheptulose 7-phosphate + ADP + H(+). Its function is as follows. Acts as a modulator of macrophage activation through control of glucose metabolism. This Homo sapiens (Human) protein is Sedoheptulokinase.